The sequence spans 379 residues: 3-isopropylmalate dehydrogenase 1 (379 aa).

Substrate-binding residues include Arg-101, Arg-111, Arg-139, and Asp-230. Positions 230, 254, and 258 each coordinate Mg(2+). An NAD(+)-binding site is contributed by 293 to 305; that stretch reads GSAPDIAGKGIAN.

The protein belongs to the isocitrate and isopropylmalate dehydrogenases family. LeuB type 1 subfamily. Homodimer. The cofactor is Mg(2+). Requires Mn(2+) as cofactor.

The protein localises to the cytoplasm. It carries out the reaction (2R,3S)-3-isopropylmalate + NAD(+) = 4-methyl-2-oxopentanoate + CO2 + NADH. Its pathway is amino-acid biosynthesis; L-leucine biosynthesis; L-leucine from 3-methyl-2-oxobutanoate: step 3/4. Functionally, catalyzes the oxidation of 3-carboxy-2-hydroxy-4-methylpentanoate (3-isopropylmalate) to 3-carboxy-4-methyl-2-oxopentanoate. The product decarboxylates to 4-methyl-2 oxopentanoate. This is 3-isopropylmalate dehydrogenase 1 from Bradyrhizobium diazoefficiens (strain JCM 10833 / BCRC 13528 / IAM 13628 / NBRC 14792 / USDA 110).